Consider the following 92-residue polypeptide: Small ribosomal subunit protein uS19 (92 aa).

The protein belongs to the universal ribosomal protein uS19 family.

In terms of biological role, protein S19 forms a complex with S13 that binds strongly to the 16S ribosomal RNA. This is Small ribosomal subunit protein uS19 from Rhodopseudomonas palustris (strain BisA53).